A 950-amino-acid chain; its full sequence is MDKTYQPHAIETSWYETWESNDYFAPSGEGQPYTIMIPPPNVTGSLHMGHGFNNAIMDALIRYRRMQGRNTLWQPGTDHAGIATQMVVERQLGAQGVSRHDLGREKFLEKVWEWKEQSGGNITRQIRRLGSSVDWSRERFTMDDGLSEAVKEAFVRLHEDGLIYRGKRLVNWDTKLHTAISDLEVENHDEKGHLWHLRYPLVNGAKTSEGLDYLVVATTRPETLLGDAAVAVHPEDERYAKLIGQFAELPIVGRHIPIIADEYVDREFGTGCVKITPAHDFNDYEVGKRHDLPLINIFDKNAAVLAQAQVFHLDGSVNPNLDPSLPQSYAGMDRFAARKAIVAEFEAMGLLEKVDDHALKVPKGDRSGTVIEPWLTDQWYVSTKPLAEDAIAAVEDGRIQFVPKQYENMYFSWMRDIQDWCISRQLWWGHRIPAWYDEAGNVYVGRDEVEVRTKHKLGNEAELRQDEDVLDTWFSSGLWTFSTLGWPQQTEFLKTFHPTDVLVTGFDIIFFWVARMIMLTMHLVKNPDGTPQIPFKTVYVHGLVRDGQGQKMSKSKGNVLDPLDIVDGIDLDTLLQKRTSGMMQPKLAEKIAKQTRAEFPEGIASYGTDALRFTFCSLASTGRDIKFDMGRVEGFRNFCNKIWNAANFVIENTDGQDTGVNGEPVELSSVDRWIISQLQRTEQEVTRQLDAFRFDLAAQALYEFIWDEYCAWYLELVKPVLWDENAPIERQRGTRRTLIRVLETALRLAHPFMPFITEEIWQRIKGQAGKEGPTLMLQPWPVADEGRIDAAAEGDIEWVKALMLGVRQIRGEMNISMAKRIDIILKNASPSDHRRLADNEPLLMKLAKLESIRVLEAGEEAPMSATALVGDMEVLVPMAGLIDKSAELGRLDKEIQRLEGEVKRVGGKLSNEGFVAKAPADVIEKERAKLAEAEQALAKLAEQRQKIAAL.

The 'HIGH' region motif lies at 40–50; that stretch reads PNVTGSLHMGH. Residues 551–555 carry the 'KMSKS' region motif; sequence KMSKS. K554 provides a ligand contact to ATP. Positions 881 to 950 form a coiled coil; it reads LIDKSAELGR…AEQRQKIAAL (70 aa).

It belongs to the class-I aminoacyl-tRNA synthetase family. ValS type 1 subfamily. Monomer.

The protein resides in the cytoplasm. The catalysed reaction is tRNA(Val) + L-valine + ATP = L-valyl-tRNA(Val) + AMP + diphosphate. Functionally, catalyzes the attachment of valine to tRNA(Val). As ValRS can inadvertently accommodate and process structurally similar amino acids such as threonine, to avoid such errors, it has a 'posttransfer' editing activity that hydrolyzes mischarged Thr-tRNA(Val) in a tRNA-dependent manner. This Pseudomonas aeruginosa (strain ATCC 15692 / DSM 22644 / CIP 104116 / JCM 14847 / LMG 12228 / 1C / PRS 101 / PAO1) protein is Valine--tRNA ligase.